Here is a 335-residue protein sequence, read N- to C-terminus: Zinc-type alcohol dehydrogenase-like protein SAR2277 (335 aa).

This sequence belongs to the zinc-containing alcohol dehydrogenase family. Quinone oxidoreductase subfamily.

The sequence is that of Zinc-type alcohol dehydrogenase-like protein SAR2277 from Staphylococcus aureus (strain MRSA252).